We begin with the raw amino-acid sequence, 332 residues long: MKIVFAGTPEFAAQAMRAIHAAGHEIVLALTQPDRRAGRGMHLQASPVKEFALEKNIPVLQPETLRRNNKDPEKQQQAEDAYRALINTNFDAMVVVAYGLILPQEILDITQQAPRFGSFNIHASLLPRWRGAAPIQRAIEAGDAKTGVCIMQMEAGLDTGDVVLTADLAIASDETSSSLHDRLAALGAGLIVDALSLLQDGKGLSRTPQPALGVTYAEKILKAEADLDWSLSAREIDARIRAFNPFPGAISNLNAETIKLWKSRLADEDAYSEAGPIGAVIGFSEDGVFVRCGDGVIEILEAQKPGGKKMNAKTCLQSVDAPEKLLCFQTKA.

124-127 contributes to the (6S)-5,6,7,8-tetrahydrofolate binding site; the sequence is SLLP.

This sequence belongs to the Fmt family.

It carries out the reaction L-methionyl-tRNA(fMet) + (6R)-10-formyltetrahydrofolate = N-formyl-L-methionyl-tRNA(fMet) + (6S)-5,6,7,8-tetrahydrofolate + H(+). Functionally, attaches a formyl group to the free amino group of methionyl-tRNA(fMet). The formyl group appears to play a dual role in the initiator identity of N-formylmethionyl-tRNA by promoting its recognition by IF2 and preventing the misappropriation of this tRNA by the elongation apparatus. The polypeptide is Methionyl-tRNA formyltransferase (Polynucleobacter asymbioticus (strain DSM 18221 / CIP 109841 / QLW-P1DMWA-1) (Polynucleobacter necessarius subsp. asymbioticus)).